The following is a 507-amino-acid chain: Cytochrome c-type protein ImcH (507 aa).

3 helical membrane-spanning segments follow: residues 14-34, 45-65, and 100-120; these read ISLI…AFIA, YIGL…LILV, and LFIF…VASI. Cys-132, Cys-136, Met-140, His-152, Cys-157, Cys-160, His-161, Asp-400, Cys-449, Cys-452, His-453, Cys-487, Cys-490, His-491, and Glu-496 together coordinate heme.

This sequence belongs to the NapC/NirT/NrfH family. Binds 4 heme c groups covalently per subunit.

It localises to the cell inner membrane. Functionally, redox protein involved in a high-potential metal respiratory pathway. Is required only for electron transfer to terminal extracellular electron acceptors with redox potentials higher than -0.1 V. ImcH likely transfers electrons from the quinone pool to a periplasmic acceptor. This is Cytochrome c-type protein ImcH from Geobacter sulfurreducens (strain ATCC 51573 / DSM 12127 / PCA).